The chain runs to 92 residues: Nodulation protein F (92 aa).

Residues 4–88 (QLTVEIIAAI…DVVEAVRGLI (85 aa)) enclose the Carrier domain. Serine 45 carries the O-(pantetheine 4'-phosphoryl)serine modification.

In terms of processing, 4'-phosphopantetheine is transferred from CoA to a specific serine of apo-NodF.

Its function is as follows. Proposed to synthesize nod factor fatty acyl chain. Involved in trans-2,trans-4,trans-6,cis-11-octadecatetraenoic acid biosynthesis. In Rhizobium leguminosarum bv. trifolii, this protein is Nodulation protein F (nodF).